Consider the following 826-residue polypeptide: E3 ubiquitin ligase PARAQUAT TOLERANCE 3 (826 aa).

Residues 3–76 enclose the DWNN domain; sequence IYYKFKSARD…NTSVLIRRVP (74 aa). Residues 203–216 form a CCHC-type zinc finger; the sequence is CHRCNVSGHFIQHC. Residue serine 278 is modified to Phosphoserine. The RING-type; degenerate zinc finger occupies 288–326; it reads CPLCKEVMRDAALASKCCLKSYCDKCIRDHIIAKSMCVC. Composition is skewed to polar residues over residues 356 to 365, 396 to 406, and 435 to 454; these read SAENAGSMCQ, PSNNNETSTLK, and NIQGSSNGKEAAVSQLNTQP. Disordered regions lie at residues 356–406, 435–488, and 585–826; these read SAEN…STLK, NIQG…GPDY, and HPIM…RARA. Serine 397 carries the post-translational modification Phosphoserine. Basic and acidic residues predominate over residues 588–624; the sequence is MGREEFEAKKTEMKRKRENEIRRSEGGNVVRDSEKSR. Polar residues predominate over residues 625–635; the sequence is IMNNSAVTSSP. Positions 651-667 are enriched in basic and acidic residues; that stretch reads DYDRRRRSDRSSPERQS. Short sequence motifs (nuclear localization signal) lie at residues 668 to 675 and 695 to 702; these read SRRFTSPP and DRRRDRPR. A compositionally biased stretch (basic and acidic residues) spans 680 to 706; sequence RKSERDRHHDLDSEHDRRRDRPRETDR. The span at 790-799 shows a compositional bias: basic residues; that stretch reads FKRKPSRYKR. Position 800 is a phosphoserine (serine 800). Positions 809 to 826 are enriched in basic and acidic residues; it reads GDEHFRHSKRSKGERARA.

Interacts with PRMT13/PRMT4B in the nucleus. Expressed constitutively in both shoot and root tissues.

It localises to the nucleus. The catalysed reaction is S-ubiquitinyl-[E2 ubiquitin-conjugating enzyme]-L-cysteine + [acceptor protein]-L-lysine = [E2 ubiquitin-conjugating enzyme]-L-cysteine + N(6)-ubiquitinyl-[acceptor protein]-L-lysine.. Functionally, E3 ubiquitin ligase acting as a negative regulator of oxidative stress tolerance, probably by mediating 26S proteasome-mediated degradation of PRMT13/PRMT4B, thus preventing APX1 and GPX1 accumulation via the reduction of histone H3 methylation (H3R17me2a). Confers sensitivity to cadmium CdCl(2) and salt NaCl stresses. The protein is E3 ubiquitin ligase PARAQUAT TOLERANCE 3 of Arabidopsis thaliana (Mouse-ear cress).